The primary structure comprises 729 residues: Fatty acid oxidation complex subunit alpha (729 aa).

The segment at 1-189 (MLYKGDTLYL…KIGLVDGVVK (189 aa)) is enoyl-CoA hydratase/isomerase. Aspartate 296 lines the substrate pocket. The tract at residues 311–729 (ETPKQAAVLG…ARPVGDLKTA (419 aa)) is 3-hydroxyacyl-CoA dehydrogenase. Residues methionine 324, aspartate 343, 400 to 402 (VVE), lysine 407, and serine 429 contribute to the NAD(+) site. Histidine 450 acts as the For 3-hydroxyacyl-CoA dehydrogenase activity in catalysis. An NAD(+)-binding site is contributed by asparagine 453. 2 residues coordinate substrate: asparagine 500 and tyrosine 660. Residues 708–729 (RHNEPYYPPVEPARPVGDLKTA) form a disordered region.

This sequence in the N-terminal section; belongs to the enoyl-CoA hydratase/isomerase family. It in the C-terminal section; belongs to the 3-hydroxyacyl-CoA dehydrogenase family. Heterotetramer of two alpha chains (FadB) and two beta chains (FadA).

It carries out the reaction a (3S)-3-hydroxyacyl-CoA + NAD(+) = a 3-oxoacyl-CoA + NADH + H(+). It catalyses the reaction a (3S)-3-hydroxyacyl-CoA = a (2E)-enoyl-CoA + H2O. The catalysed reaction is a 4-saturated-(3S)-3-hydroxyacyl-CoA = a (3E)-enoyl-CoA + H2O. The enzyme catalyses (3S)-3-hydroxybutanoyl-CoA = (3R)-3-hydroxybutanoyl-CoA. It carries out the reaction a (3Z)-enoyl-CoA = a 4-saturated (2E)-enoyl-CoA. It catalyses the reaction a (3E)-enoyl-CoA = a 4-saturated (2E)-enoyl-CoA. Its pathway is lipid metabolism; fatty acid beta-oxidation. In terms of biological role, involved in the aerobic and anaerobic degradation of long-chain fatty acids via beta-oxidation cycle. Catalyzes the formation of 3-oxoacyl-CoA from enoyl-CoA via L-3-hydroxyacyl-CoA. It can also use D-3-hydroxyacyl-CoA and cis-3-enoyl-CoA as substrate. This chain is Fatty acid oxidation complex subunit alpha, found in Escherichia coli (strain K12 / MC4100 / BW2952).